Consider the following 164-residue polypeptide: Thiol peroxidase (164 aa).

Residues 16-162 form the Thioredoxin domain; sequence LQVGDIAKDF…YEAAINAAKI (147 aa). Catalysis depends on Cys-58, which acts as the Cysteine sulfenic acid (-SOH) intermediate. An intrachain disulfide couples Cys-58 to Cys-92.

It belongs to the peroxiredoxin family. Tpx subfamily. Homodimer.

The enzyme catalyses a hydroperoxide + [thioredoxin]-dithiol = an alcohol + [thioredoxin]-disulfide + H2O. Its function is as follows. Thiol-specific peroxidase that catalyzes the reduction of hydrogen peroxide and organic hydroperoxides to water and alcohols, respectively. Plays a role in cell protection against oxidative stress by detoxifying peroxides. The polypeptide is Thiol peroxidase (Streptococcus agalactiae serotype III (strain NEM316)).